Reading from the N-terminus, the 473-residue chain is Glycosyl hydrolase family 109 protein 2 (473 aa).

The segment at residues 1–31 (MSIFSSRRQFLKSLGLAAGAAAAGNALPGKA) is a signal peptide (tat-type signal). Residues 77–78 (GR), Asp99, 148–151 (WSSH), 168–169 (EV), and Asn197 each bind NAD(+). Substrate-binding positions include Tyr226, Arg244, 256–259 (YPTH), and Tyr339. NAD(+) is bound at residue Tyr256.

This sequence belongs to the Gfo/Idh/MocA family. Glycosyl hydrolase 109 subfamily. It depends on NAD(+) as a cofactor. Post-translationally, predicted to be exported by the Tat system. The position of the signal peptide cleavage has not been experimentally proven.

Its function is as follows. Glycosidase. The polypeptide is Glycosyl hydrolase family 109 protein 2 (Akkermansia muciniphila (strain ATCC BAA-835 / DSM 22959 / JCM 33894 / BCRC 81048 / CCUG 64013 / CIP 107961 / Muc)).